Here is a 187-residue protein sequence, read N- to C-terminus: Ribosome maturation factor RimP (187 aa).

The protein belongs to the RimP family.

Its subcellular location is the cytoplasm. Functionally, required for maturation of 30S ribosomal subunits. This is Ribosome maturation factor RimP from Phenylobacterium zucineum (strain HLK1).